We begin with the raw amino-acid sequence, 85 residues long: ATP synthase subunit c (85 aa).

Transmembrane regions (helical) follow at residues 10–30 (IAVAIMIGLAALGTGIGFAIL) and 53–73 (FIVAGLLDAISMIAVGVALFF).

Belongs to the ATPase C chain family. F-type ATPases have 2 components, F(1) - the catalytic core - and F(0) - the membrane proton channel. F(1) has five subunits: alpha(3), beta(3), gamma(1), delta(1), epsilon(1). F(0) has three main subunits: a(1), b(2) and c(10-14). The alpha and beta chains form an alternating ring which encloses part of the gamma chain. F(1) is attached to F(0) by a central stalk formed by the gamma and epsilon chains, while a peripheral stalk is formed by the delta and b chains.

It localises to the cell inner membrane. Functionally, f(1)F(0) ATP synthase produces ATP from ADP in the presence of a proton or sodium gradient. F-type ATPases consist of two structural domains, F(1) containing the extramembraneous catalytic core and F(0) containing the membrane proton channel, linked together by a central stalk and a peripheral stalk. During catalysis, ATP synthesis in the catalytic domain of F(1) is coupled via a rotary mechanism of the central stalk subunits to proton translocation. Key component of the F(0) channel; it plays a direct role in translocation across the membrane. A homomeric c-ring of between 10-14 subunits forms the central stalk rotor element with the F(1) delta and epsilon subunits. This is ATP synthase subunit c from Shewanella halifaxensis (strain HAW-EB4).